The following is a 336-amino-acid chain: Acetyl-coenzyme A carboxylase carboxyl transferase subunit alpha (336 aa).

Positions 48 to 308 (ALEAKVESLR…KSMLIEELQG (261 aa)) constitute a CoA carboxyltransferase C-terminal domain.

This sequence belongs to the AccA family. As to quaternary structure, acetyl-CoA carboxylase is a heterohexamer composed of biotin carboxyl carrier protein (AccB), biotin carboxylase (AccC) and two subunits each of ACCase subunit alpha (AccA) and ACCase subunit beta (AccD).

It localises to the cytoplasm. It carries out the reaction N(6)-carboxybiotinyl-L-lysyl-[protein] + acetyl-CoA = N(6)-biotinyl-L-lysyl-[protein] + malonyl-CoA. Its pathway is lipid metabolism; malonyl-CoA biosynthesis; malonyl-CoA from acetyl-CoA: step 1/1. In terms of biological role, component of the acetyl coenzyme A carboxylase (ACC) complex. First, biotin carboxylase catalyzes the carboxylation of biotin on its carrier protein (BCCP) and then the CO(2) group is transferred by the carboxyltransferase to acetyl-CoA to form malonyl-CoA. This is Acetyl-coenzyme A carboxylase carboxyl transferase subunit alpha from Chlorobaculum parvum (strain DSM 263 / NCIMB 8327) (Chlorobium vibrioforme subsp. thiosulfatophilum).